The chain runs to 829 residues: Isethionate sulfite-lyase (829 aa).

The PFL domain maps to 31–699 (ERVFNILDSF…VVSATPNGRL (669 aa)). 2-hydroxyethane-1-sulfonate contacts are provided by residues Arg-188, Gln-192, 467-469 (CTE), and Arg-677. Catalysis depends on Cys-467, which acts as the Cysteine radical intermediate. Residue Glu-469 is the Proton acceptor of the active site. Residues 706-829 (DGSSASHGAD…LIARTQHDAM (124 aa)) enclose the Glycine radical domain. The residue at position 804 (Gly-804) is a Glycine radical.

Belongs to the glycyl radical enzyme (GRE) family. In terms of assembly, homodimer. Post-translationally, requires the activating protein IslB to generate the key active site glycyl radical on Gly-804 that is involved in catalysis.

It carries out the reaction 2-hydroxyethane-1-sulfonate = acetaldehyde + sulfite + H(+). It functions in the pathway organosulfur degradation; alkanesulfonate degradation. Functionally, involved in an anaerobic respiration pathway that converts the sulfonate isethionate (2-hydroxyethanesulfonate) to ammonia, acetate and sulfide. Catalyzes the radical-mediated C-S bond cleavage of isethionate (2-hydroxyethanesulfonate) to form sulfite and acetaldehyde. This is Isethionate sulfite-lyase from Oleidesulfovibrio alaskensis (strain ATCC BAA-1058 / DSM 17464 / G20) (Desulfovibrio alaskensis).